The following is a 214-amino-acid chain: Response regulator GacA (214 aa).

The region spanning K3–F119 is the Response regulatory domain. D54 is subject to 4-aspartylphosphate. The region spanning H143 to G208 is the HTH luxR-type domain. Residues V167 to Y186 constitute a DNA-binding region (H-T-H motif).

Functionally, positively controls the production of the autoinducer N-butyryl-homoserine lactone and the formation of the virulence factors pyocyanine, cyanide, and lipase. This chain is Response regulator GacA (gacA), found in Pseudomonas aeruginosa (strain ATCC 15692 / DSM 22644 / CIP 104116 / JCM 14847 / LMG 12228 / 1C / PRS 101 / PAO1).